A 185-amino-acid polypeptide reads, in one-letter code: V-type ATP synthase subunit E (185 aa).

This sequence belongs to the V-ATPase E subunit family.

In terms of biological role, produces ATP from ADP in the presence of a proton gradient across the membrane. The polypeptide is V-type ATP synthase subunit E (Deinococcus radiodurans (strain ATCC 13939 / DSM 20539 / JCM 16871 / CCUG 27074 / LMG 4051 / NBRC 15346 / NCIMB 9279 / VKM B-1422 / R1)).